A 513-amino-acid polypeptide reads, in one-letter code: Zinc finger protein RFP (513 aa).

The RING-type zinc finger occupies 16 to 57 (CPVCLQYFAEPMMLDCGHNICCACLARCWGTAETNVSCPQCR). Zn(2+) contacts are provided by Cys96, His99, Cys118, and His124. The B box-type zinc-finger motif lies at 96–127 (CEKHREPLKLYCEEDQMPICVVCDRSREHRGH). Coiled coils occupy residues 132–172 (LEEA…AELL) and 282–311 (QKCLFLTESLKQFTEKMQSDMEKIQELREA). In terms of domain architecture, B30.2/SPRY spans 298–492 (MQSDMEKIQE…SAAPLIICPM (195 aa)).

The protein belongs to the TRIM/RBCC family. Homomultimerizes. Part of a complex consisting of TRIM27, USP7 and MAGEL2; directly interacts with USP7. Interacts with PML, EIF3S6, EPC1, CHD4 and EID1. Interacts with MAGED4, MAGEF1 and MAGEL2. Interacts with PTPN11. Interacts with autophagy receptor p62/SQSTM1. As to quaternary structure, (Microbial infection) Interacts with M.tuberculosis PtpA, whick blocks TRIM27-promoted JNK/p38 MAPK pathway activation and cell apoptosis. In terms of assembly, (Microbial infection) Interacts with herpes simplex virus protein ICP0. As to expression, expressed in testis namely within the seminiferous tubules.

The protein resides in the nucleus. The protein localises to the cytoplasm. Its subcellular location is the PML body. It is found in the early endosome. It localises to the mitochondrion. It catalyses the reaction S-ubiquitinyl-[E2 ubiquitin-conjugating enzyme]-L-cysteine + [acceptor protein]-L-lysine = [E2 ubiquitin-conjugating enzyme]-L-cysteine + N(6)-ubiquitinyl-[acceptor protein]-L-lysine.. It participates in protein modification; protein ubiquitination. Its function is as follows. E3 ubiquitin-protein ligase that mediates ubiquitination of various substrates and thereby plays a role in diffent processes including proliferation, innate immunity, apoptosis, immune response or autophagy. Ubiquitinates PIK3C2B and inhibits its activity by mediating the formation of 'Lys-48'-linked polyubiquitin chains; the function inhibits CD4 T-cell activation. Acts as a regulator of retrograde transport: together with MAGEL2, mediates the formation of 'Lys-63'-linked polyubiquitin chains at 'Lys-220' of WASHC1, leading to promote endosomal F-actin assembly. Has a transcriptional repressor activity by cooperating with EPC1. Induces apoptosis by activating Jun N-terminal kinase and p38 kinase and also increases caspase-3-like activity independently of mitochondrial events. May function in male germ cell development. Has DNA-binding activity and preferentially bound to double-stranded DNA. Forms a complex with and ubiquitinates the ubiquitin-specific protease USP7, which in turn deubiquitinates RIPK1 resulting in the positive regulation of TNF-alpha-induced apoptosis. In addition, acts with USP7 or PTPN11 as an inhibitor of the antiviral signaling pathway by promoting kinase TBK1 ubiquitination and degradation. Acts as a negative regulator of NOD2 signaling by mediating ubiquitination of NOD2, promoting its degradation by the proteasome. Alternatively, facilitates mitophagy via stabilization of active TBK1. Negatively regulates autophagy flux under basal conditions by directly polyubiquitinating ULK1. During starvation-induced autophagy, catalyzes non-degradative ubiquitination of the kinase STK38L promoting its activation and phosphorylation of ULK1 leading to its ubiquitination and degradation to restrain the amplitude and duration of autophagy. Functionally, (Microbial infection) Positively regulates hepatitis C virus replication by suppressing type I IFN response during infection. This chain is Zinc finger protein RFP, found in Homo sapiens (Human).